The sequence spans 701 residues: Elongation factor G (701 aa).

Residues 8-290 enclose the tr-type G domain; it reads SLYRNIGISA…AVVELLPAPT (283 aa). GTP-binding positions include 17-24, 88-92, and 142-145; these read AHIDAGKT, DTPGH, and NKMD.

Belongs to the TRAFAC class translation factor GTPase superfamily. Classic translation factor GTPase family. EF-G/EF-2 subfamily.

It is found in the cytoplasm. In terms of biological role, catalyzes the GTP-dependent ribosomal translocation step during translation elongation. During this step, the ribosome changes from the pre-translocational (PRE) to the post-translocational (POST) state as the newly formed A-site-bound peptidyl-tRNA and P-site-bound deacylated tRNA move to the P and E sites, respectively. Catalyzes the coordinated movement of the two tRNA molecules, the mRNA and conformational changes in the ribosome. The sequence is that of Elongation factor G from Neisseria gonorrhoeae (strain ATCC 700825 / FA 1090).